The following is a 440-amino-acid chain: MSSMTPREIVHELDKHIVGQQDAKRAVAIALRNRWRRMQLPADMRSEVTPKNILMIGPTGVGKTEIARRLAKLANAPFIKVEATKFTEVGYVGRDVESIIRDLVDVAIKLRREQAMKAVQYRAAEAAEERILDVLLPPARDTSEEESKHESSTRQIFRKKLREGQLDDKEIEIDVAAASVGVEIMAPPGMEEMTSQLQNMFSSLGRERTKKTKMTVKKAFKQLQDEEAAKLVSEEDIKTQALETVEQNGIVFIDEIDKVARRGNVSGADVSREGVQRDLLPLIEGCTVSTKHGMVKTDHILFITSGAFHLSKPSDLIPELQGRLPIRVELQALTPDDFERILTEPKASLTEQQQALLKTEGVDIQFTQDGIRRIAETAFDVNERTENIGARRLHTILERLLEDVSFDAGNDTSSIRIDGAYVDAHLGELAKNEDLSRYIL.

ATP-binding positions include Val-18, 60-65 (GVGKTE), Asp-254, Glu-319, and Arg-391.

The protein belongs to the ClpX chaperone family. HslU subfamily. In terms of assembly, a double ring-shaped homohexamer of HslV is capped on each side by a ring-shaped HslU homohexamer. The assembly of the HslU/HslV complex is dependent on binding of ATP.

It localises to the cytoplasm. In terms of biological role, ATPase subunit of a proteasome-like degradation complex; this subunit has chaperone activity. The binding of ATP and its subsequent hydrolysis by HslU are essential for unfolding of protein substrates subsequently hydrolyzed by HslV. HslU recognizes the N-terminal part of its protein substrates and unfolds these before they are guided to HslV for hydrolysis. This is ATP-dependent protease ATPase subunit HslU from Cellvibrio japonicus (strain Ueda107) (Pseudomonas fluorescens subsp. cellulosa).